We begin with the raw amino-acid sequence, 312 residues long: Malate dehydrogenase (312 aa).

NAD(+) contacts are provided by residues 7 to 13 (GAAGGIG) and Asp-34. Residues Arg-81 and Arg-87 each contribute to the substrate site. NAD(+) contacts are provided by residues Asn-94 and 117-119 (ITN). Substrate contacts are provided by Asn-119 and Arg-153. His-177 serves as the catalytic Proton acceptor. Met-227 is an NAD(+) binding site.

The protein belongs to the LDH/MDH superfamily. MDH type 1 family. Homodimer.

It catalyses the reaction (S)-malate + NAD(+) = oxaloacetate + NADH + H(+). Functionally, catalyzes the reversible oxidation of malate to oxaloacetate. The protein is Malate dehydrogenase of Klebsiella pneumoniae (strain 342).